The primary structure comprises 119 residues: Large ribosomal subunit protein uL24 (119 aa).

It belongs to the universal ribosomal protein uL24 family. Part of the 50S ribosomal subunit.

Functionally, one of two assembly initiator proteins, it binds directly to the 5'-end of the 23S rRNA, where it nucleates assembly of the 50S subunit. Its function is as follows. One of the proteins that surrounds the polypeptide exit tunnel on the outside of the subunit. In Leifsonia xyli subsp. xyli (strain CTCB07), this protein is Large ribosomal subunit protein uL24.